Here is a 355-residue protein sequence, read N- to C-terminus: Protein RecA (355 aa).

Residue 65–72 coordinates ATP; the sequence is GPESSGKT.

It belongs to the RecA family.

Its subcellular location is the cytoplasm. Functionally, can catalyze the hydrolysis of ATP in the presence of single-stranded DNA, the ATP-dependent uptake of single-stranded DNA by duplex DNA, and the ATP-dependent hybridization of homologous single-stranded DNAs. It interacts with LexA causing its activation and leading to its autocatalytic cleavage. This is Protein RecA from Pseudomonas entomophila (strain L48).